The sequence spans 1015 residues: Translation initiation factor IF-2 (1015 aa).

Disordered stretches follow at residues 124-144 (EKEP…EKKV), 159-179 (EVTV…PKPV), 196-230 (KKEE…KEEE), and 250-386 (IDLA…VSEE). 2 stretches are compositionally biased toward basic and acidic residues: residues 196–217 (KKEE…EKPV) and 265–315 (SKEE…DPNG). One can recognise a tr-type G domain in the interval 514–684 (HRAPIVTVMG…LLEAEMLDLK (171 aa)). The tract at residues 523 to 530 (GHVDHGKT) is G1. GTP is bound at residue 523-530 (GHVDHGKT). Positions 548–552 (GITQH) are G2. Residues 570-573 (DTPG) are G3. GTP contacts are provided by residues 570–574 (DTPGH) and 624–627 (NKID). A G4 region spans residues 624–627 (NKID). The segment at 660–662 (SAK) is G5.

It belongs to the TRAFAC class translation factor GTPase superfamily. Classic translation factor GTPase family. IF-2 subfamily.

The protein resides in the cytoplasm. Functionally, one of the essential components for the initiation of protein synthesis. Protects formylmethionyl-tRNA from spontaneous hydrolysis and promotes its binding to the 30S ribosomal subunits. Also involved in the hydrolysis of GTP during the formation of the 70S ribosomal complex. This is Translation initiation factor IF-2 from Bacteroides fragilis (strain ATCC 25285 / DSM 2151 / CCUG 4856 / JCM 11019 / LMG 10263 / NCTC 9343 / Onslow / VPI 2553 / EN-2).